A 361-amino-acid polypeptide reads, in one-letter code: Tyrosine--tRNA ligase (361 aa).

L-tyrosine is bound by residues tyrosine 36, tyrosine 162, glutamine 166, aspartate 169, and glutamine 184. A 'KMSKS' region motif is present at residues 236 to 240 (KMSKS). Lysine 239 provides a ligand contact to ATP.

The protein belongs to the class-I aminoacyl-tRNA synthetase family. TyrS type 4 subfamily. In terms of assembly, homodimer.

The protein resides in the cytoplasm. The catalysed reaction is tRNA(Tyr) + L-tyrosine + ATP = L-tyrosyl-tRNA(Tyr) + AMP + diphosphate + H(+). Functionally, catalyzes the attachment of tyrosine to tRNA(Tyr) in a two-step reaction: tyrosine is first activated by ATP to form Tyr-AMP and then transferred to the acceptor end of tRNA(Tyr). The sequence is that of Tyrosine--tRNA ligase from Saccharolobus islandicus (strain M.14.25 / Kamchatka #1) (Sulfolobus islandicus).